Here is a 388-residue protein sequence, read N- to C-terminus: Phosphoglycerate kinase (388 aa).

Residues 21-23 (DLN), R36, 59-62 (HLGR), R114, and R147 each bind substrate. ATP is bound by residues K198, E315, and 341 to 344 (GGDT).

This sequence belongs to the phosphoglycerate kinase family. As to quaternary structure, monomer.

The protein localises to the cytoplasm. It carries out the reaction (2R)-3-phosphoglycerate + ATP = (2R)-3-phospho-glyceroyl phosphate + ADP. The protein operates within carbohydrate degradation; glycolysis; pyruvate from D-glyceraldehyde 3-phosphate: step 2/5. This chain is Phosphoglycerate kinase, found in Hahella chejuensis (strain KCTC 2396).